We begin with the raw amino-acid sequence, 204 residues long: Probable nicotinate-nucleotide adenylyltransferase (204 aa).

This sequence belongs to the NadD family.

The enzyme catalyses nicotinate beta-D-ribonucleotide + ATP + H(+) = deamido-NAD(+) + diphosphate. It functions in the pathway cofactor biosynthesis; NAD(+) biosynthesis; deamido-NAD(+) from nicotinate D-ribonucleotide: step 1/1. Functionally, catalyzes the reversible adenylation of nicotinate mononucleotide (NaMN) to nicotinic acid adenine dinucleotide (NaAD). This chain is Probable nicotinate-nucleotide adenylyltransferase, found in Methylacidiphilum infernorum (isolate V4) (Methylokorus infernorum (strain V4)).